The primary structure comprises 408 residues: UV excision repair protein RAD23 homolog B (408 aa).

The 79-residue stretch at 1–79 (MLVTLKTLQQ…VVVMVTKPKA (79 aa)) folds into the Ubiquitin-like domain. Low complexity predominate over residues 80-111 (VTTPAPATTQQSNSAATTTVSSSTAPAVTQAP). Positions 80 to 176 (VTTPAPATTQ…TSGDSSRSNL (97 aa)) are disordered. A compositionally biased stretch (pro residues) spans 112 to 122 (APAPASAPTPT). Over residues 123-143 (PVSVTPAPTTASSEPAPASAA) the composition is skewed to low complexity. Basic and acidic residues predominate over residues 144-153 (KQEKPAERPV). The span at 154–174 (ETPVATTPTSTDSTSGDSSRS) shows a compositional bias: low complexity. Thr-155 and Thr-164 each carry phosphothreonine. A Phosphoserine modification is found at Ser-174. Thr-186 bears the Phosphothreonine mark. Positions 188-228 (QSYENMVTEIMSMGYEREQVIAALRASFNNPDRAVEYLLMG) constitute a UBA 1 domain. Ser-199 carries the post-translational modification Phosphoserine. Residue Tyr-202 is modified to Phosphotyrosine. A disordered region spans residues 236 to 274 (QAVVDPPPAASTGAPQSSVAAAAATTTATTTTTSSGGHP). The segment covering 255-268 (AAAAATTTATTTTT) has biased composition (low complexity). The STI1 domain occupies 273–316 (HPLEFLRNQPQFQQMRQIIQQNPSLLPALLQQIGRENPQLLQQI). Residues 363 to 403 (PQEKEAIERLKALGFPEGLVIQAYFACEKNENLAANFLLQQ) form the UBA 2 domain.

The protein belongs to the RAD23 family. In terms of assembly, component of the XPC complex composed of XPC, RAD23B and CETN2. Interacts with NGLY1 and PSMC1. Interacts with ATXN3. Interacts with PSMD4 and PSMC5. Interacts with AMFR. Interacts with VCP; the interaction is indirect and mediated by NGLY1.

It localises to the nucleus. Its subcellular location is the cytoplasm. Functionally, multiubiquitin chain receptor involved in modulation of proteasomal degradation. Binds to polyubiquitin chains. Proposed to be capable to bind simultaneously to the 26S proteasome and to polyubiquitinated substrates and to deliver ubiquitinated proteins to the proteasome. May play a role in endoplasmic reticulum-associated degradation (ERAD) of misfolded glycoproteins by association with PNGase and delivering deglycosylated proteins to the proteasome. Its function is as follows. Involved in global genome nucleotide excision repair (GG-NER) by acting as component of the XPC complex. Cooperatively with CETN2 appears to stabilize XPC. May protect XPC from proteasomal degradation. In terms of biological role, the XPC complex is proposed to represent the first factor bound at the sites of DNA damage and together with other core recognition factors, XPA, RPA and the TFIIH complex, is part of the pre-incision (or initial recognition) complex. The XPC complex recognizes a wide spectrum of damaged DNA characterized by distortions of the DNA helix such as single-stranded loops, mismatched bubbles or single-stranded overhangs. The orientation of XPC complex binding appears to be crucial for inducing a productive NER. XPC complex is proposed to recognize and to interact with unpaired bases on the undamaged DNA strand which is followed by recruitment of the TFIIH complex and subsequent scanning for lesions in the opposite strand in a 5'-to-3' direction by the NER machinery. Cyclobutane pyrimidine dimers (CPDs) which are formed upon UV-induced DNA damage esacpe detection by the XPC complex due to a low degree of structural perurbation. Instead they are detected by the UV-DDB complex which in turn recruits and cooperates with the XPC complex in the respective DNA repair. In vitro, the XPC:RAD23B dimer is sufficient to initiate NER; it preferentially binds to cisplatin and UV-damaged double-stranded DNA and also binds to a variety of chemically and structurally diverse DNA adducts. XPC:RAD23B contacts DNA both 5' and 3' of a cisplatin lesion with a preference for the 5' side. XPC:RAD23B induces a bend in DNA upon binding. XPC:RAD23B stimulates the activity of DNA glycosylases TDG and SMUG1. The protein is UV excision repair protein RAD23 homolog B (RAD23B) of Bos taurus (Bovine).